Consider the following 146-residue polypeptide: Cystatin-C (146 aa).

The first 26 residues, 1-26 (MAGPLRAPLLLLAILAVALAVSPAAG), serve as a signal peptide directing secretion. At serine 43 the chain carries Phosphoserine. The short motif at 81-85 (QIVAG) is the Secondary area of contact element. Intrachain disulfides connect cysteine 99-cysteine 109 and cysteine 123-cysteine 143.

The protein belongs to the cystatin family.

It is found in the secreted. In terms of biological role, as an inhibitor of cysteine proteinases, this protein is thought to serve an important physiological role as a local regulator of this enzyme activity. This is Cystatin-C (CST3) from Macaca mulatta (Rhesus macaque).